Here is a 550-residue protein sequence, read N- to C-terminus: Mitochondrial distribution and morphology protein 34 (550 aa).

Positions 1–208 (MAFNFNWSPL…CPEQMSKEDH (208 aa)) constitute an SMP-LTD domain. 3 disordered regions span residues 294–313 (VDKP…LVKS), 358–505 (RNAK…ILEQ), and 519–550 (VYDE…TAAS). Over residues 300–310 (SSTTPLTTPSL) the composition is skewed to low complexity. Basic residues predominate over residues 364-376 (ANRKKKTRVVNLR). 2 stretches are compositionally biased toward polar residues: residues 391 to 407 (MSDS…TMSD) and 458 to 467 (AEISQPQVAR). Positions 481–495 (SENDKRSDSKRRGPR) are enriched in basic and acidic residues.

Belongs to the MDM34 family. Component of the ER-mitochondria encounter structure (ERMES) or MDM complex, composed of MMM1, MDM10, MDM12 and MDM34.

Its subcellular location is the mitochondrion outer membrane. Its function is as follows. Component of the ERMES/MDM complex, which serves as a molecular tether to connect the endoplasmic reticulum (ER) and mitochondria. Components of this complex are involved in the control of mitochondrial shape and protein biogenesis, and function in nonvesicular lipid trafficking between the ER and mitochondria. MDM34 is required for the interaction of the ER-resident membrane protein MMM1 and the outer mitochondrial membrane-resident beta-barrel protein MDM10. The protein is Mitochondrial distribution and morphology protein 34 of Pyricularia oryzae (strain 70-15 / ATCC MYA-4617 / FGSC 8958) (Rice blast fungus).